Consider the following 684-residue polypeptide: Transcriptional regulatory protein RCO1 (684 aa).

Met-1 carries the N-acetylmethionine modification. A disordered region spans residues 1-48; that stretch reads MDTSKKDTTRSPSHSNSSSPSSSSLSSSSSKEKKRPKRLSSQNVNYDL. Residues 10–29 show a composition bias toward low complexity; sequence RSPSHSNSSSPSSSSLSSSS. A Phosphoserine modification is found at Ser-68. The PHD-type 1 zinc-finger motif lies at 260–309; sequence EDFCSACNQSGSFLCCDTCPKSFHFLCLDPPIDPNNLPKGDWHCNECKFK. Residues 414–472 form a PHD-type 2; atypical zinc finger; that stretch reads FLICYKCNQTRLGSWSHPENSRLIMTCDYCQTPWHLDCVPRASFKNLGSKWKCPLHSPT. Ser-683 is subject to Phosphoserine.

In terms of assembly, component of the RPD3C(S) complex composed of at least EAF3, RCO1, RPD3, SIN3, and UME1.

Its subcellular location is the nucleus. In terms of biological role, catalytic component of the RPD3C(S) histone deacetylase complex responsible for the deacetylation of lysine residues on the N-terminal part of the core histones (H2A, H2B, H3 and H4). Histone deacetylation gives a tag for epigenetic repression and plays an important role in transcriptional regulation, cell cycle progression, DNA damage response, osmotic stress response and developmental events. This Saccharomyces cerevisiae (strain ATCC 204508 / S288c) (Baker's yeast) protein is Transcriptional regulatory protein RCO1 (RCO1).